The sequence spans 622 residues: Probable potassium transport system protein Kup (622 aa).

12 consecutive transmembrane segments (helical) span residues 8 to 28, 50 to 70, 100 to 120, 137 to 157, 169 to 189, 203 to 223, 247 to 267, 285 to 305, 337 to 357, 366 to 386, 392 to 412, and 419 to 439; these read LAAL…TSVL, VLSV…VVLV, GWLL…GVIT, PHFG…LFAV, FGPV…PHIV, ALGF…AVVL, WFSV…ALLL, ALVP…QALI, IYLP…VVMF, AYGI…FFVI, YPLA…LAFF, and LLQG…LMMT.

It belongs to the HAK/KUP transporter (TC 2.A.72) family.

It is found in the cell inner membrane. The catalysed reaction is K(+)(in) + H(+)(in) = K(+)(out) + H(+)(out). Its function is as follows. Transport of potassium into the cell. Likely operates as a K(+):H(+) symporter. The chain is Probable potassium transport system protein Kup from Acidovorax ebreus (strain TPSY) (Diaphorobacter sp. (strain TPSY)).